Here is a 148-residue protein sequence, read N- to C-terminus: Macrodomain Ter protein (148 aa).

Belongs to the MatP family. In terms of assembly, homodimer.

The protein resides in the cytoplasm. Required for spatial organization of the terminus region of the chromosome (Ter macrodomain) during the cell cycle. Prevents early segregation of duplicated Ter macrodomains during cell division. Binds specifically to matS, which is a 13 bp signature motif repeated within the Ter macrodomain. The polypeptide is Macrodomain Ter protein (Haemophilus ducreyi (strain 35000HP / ATCC 700724)).